The chain runs to 193 residues: dTTP/UTP pyrophosphatase (193 aa).

Aspartate 77 acts as the Proton acceptor in catalysis.

It belongs to the Maf family. YhdE subfamily. The cofactor is a divalent metal cation.

It localises to the cytoplasm. It catalyses the reaction dTTP + H2O = dTMP + diphosphate + H(+). The catalysed reaction is UTP + H2O = UMP + diphosphate + H(+). In terms of biological role, nucleoside triphosphate pyrophosphatase that hydrolyzes dTTP and UTP. May have a dual role in cell division arrest and in preventing the incorporation of modified nucleotides into cellular nucleic acids. This chain is dTTP/UTP pyrophosphatase, found in Bacteroides fragilis (strain ATCC 25285 / DSM 2151 / CCUG 4856 / JCM 11019 / LMG 10263 / NCTC 9343 / Onslow / VPI 2553 / EN-2).